Here is a 488-residue protein sequence, read N- to C-terminus: Glycogen synthase (488 aa).

ADP-alpha-D-glucose is bound at residue Arg-20.

The protein belongs to the glycosyltransferase 1 family. Bacterial/plant glycogen synthase subfamily.

The catalysed reaction is [(1-&gt;4)-alpha-D-glucosyl](n) + ADP-alpha-D-glucose = [(1-&gt;4)-alpha-D-glucosyl](n+1) + ADP + H(+). Its pathway is glycan biosynthesis; glycogen biosynthesis. Its function is as follows. Synthesizes alpha-1,4-glucan chains using ADP-glucose. This Chlorobaculum parvum (strain DSM 263 / NCIMB 8327) (Chlorobium vibrioforme subsp. thiosulfatophilum) protein is Glycogen synthase.